Here is a 389-residue protein sequence, read N- to C-terminus: Succinate--CoA ligase [ADP-forming] subunit beta (389 aa).

The ATP-grasp domain occupies 9–236 (RDLFEAHGVP…ERTEDPLEAK (228 aa)). ATP is bound by residues K45, 52–54 (GRG), A94, and E99. Mg(2+) is bound by residues N191 and D205. Substrate contacts are provided by residues N256 and 318 to 320 (GIT).

It belongs to the succinate/malate CoA ligase beta subunit family. In terms of assembly, heterotetramer of two alpha and two beta subunits. Requires Mg(2+) as cofactor.

It catalyses the reaction succinate + ATP + CoA = succinyl-CoA + ADP + phosphate. It carries out the reaction GTP + succinate + CoA = succinyl-CoA + GDP + phosphate. Its pathway is carbohydrate metabolism; tricarboxylic acid cycle; succinate from succinyl-CoA (ligase route): step 1/1. Succinyl-CoA synthetase functions in the citric acid cycle (TCA), coupling the hydrolysis of succinyl-CoA to the synthesis of either ATP or GTP and thus represents the only step of substrate-level phosphorylation in the TCA. The beta subunit provides nucleotide specificity of the enzyme and binds the substrate succinate, while the binding sites for coenzyme A and phosphate are found in the alpha subunit. The sequence is that of Succinate--CoA ligase [ADP-forming] subunit beta from Micrococcus luteus (strain ATCC 4698 / DSM 20030 / JCM 1464 / CCM 169 / CCUG 5858 / IAM 1056 / NBRC 3333 / NCIMB 9278 / NCTC 2665 / VKM Ac-2230) (Micrococcus lysodeikticus).